A 501-amino-acid chain; its full sequence is Histone deacetylase 19 (501 aa).

The tract at residues 17 to 329 (RKVCYFYDPE…WCYETGVALG (313 aa)) is histone deacetylase. The Proton donor/acceptor role is filled by His-149. Zn(2+)-binding residues include Asp-184, His-186, and Asp-272. The tract at residues 383 to 501 (HAPSVPFQER…GAEQAFPPKT (119 aa)) is disordered. The segment covering 397 to 407 (ETPEVDEDQED) has biased composition (acidic residues). A Phosphoserine modification is found at Ser-416. 2 stretches are compositionally biased toward basic and acidic residues: residues 422 to 457 (DDRKPIPSRVKREAVEPDTKDKDGLKGIMERGKGCE) and 479 to 488 (ASVKMEEEGT).

It belongs to the histone deacetylase family. HD type 1 subfamily. In terms of assembly, interacts with SIN3, SAP18 and TPR1. Interacts with CDKE-1, MED14 and LUG. Interacts with TPL. Interacts with AHL22. Requires Zn(2+) as cofactor. Highly expressed in leaves, stems, flowers and young siliques.

The protein resides in the nucleus. The enzyme catalyses N(6)-acetyl-L-lysyl-[histone] + H2O = L-lysyl-[histone] + acetate. Responsible for the deacetylation of lysine residues on the N-terminal part of the core histones (H2A, H2B, H3 and H4). Histone deacetylation gives a tag for epigenetic repression and plays an important role in transcriptional regulation, cell cycle progression and developmental events. Histone deacetylases act via the formation of large multiprotein complexes. HDA19 is involved in jasmonic acid and ethylene signaling of pathogen response. Part of a repressor complex including APETALA2 (AP2) and TOPLESS (TPL) that control the expression domains of numerous floral organ identity genes. Involved in negative regulation of salinity stress response. Represses the expression of stress tolerance-related genes, genes coding for late embryogenesis abundant (LEA) proteins that prevent protein aggregation, and positive regulators of abscisic acid (ABA) signaling, such as ABI5 and NAC019. The protein is Histone deacetylase 19 of Arabidopsis thaliana (Mouse-ear cress).